Consider the following 435-residue polypeptide: Eukaryotic translation initiation factor 3 subunit E (435 aa).

In terms of domain architecture, PCI spans 219-392 (FFNHAKGRDL…GHVVMGTQPL (174 aa)).

The protein belongs to the eIF-3 subunit E family. As to quaternary structure, component of the eukaryotic translation initiation factor 3 (eIF-3) complex.

The protein resides in the cytoplasm. In terms of biological role, component of the eukaryotic translation initiation factor 3 (eIF-3) complex, which is involved in protein synthesis of a specialized repertoire of mRNAs and, together with other initiation factors, stimulates binding of mRNA and methionyl-tRNAi to the 40S ribosome. The eIF-3 complex specifically targets and initiates translation of a subset of mRNAs involved in cell proliferation. This is Eukaryotic translation initiation factor 3 subunit E (eIF3-S6) from Culex quinquefasciatus (Southern house mosquito).